The sequence spans 130 residues: Universal stress protein MSMEG_4207 (130 aa).

N6-acetyllysine is present on lysine 104.

This sequence belongs to the universal stress protein A family. Acetylated on Lys-104 by PatA in the presence of acetyl-CoA as an acetyl donor.

This Mycolicibacterium smegmatis (strain ATCC 700084 / mc(2)155) (Mycobacterium smegmatis) protein is Universal stress protein MSMEG_4207.